The following is a 70-amino-acid chain: UPF0352 protein Sfri_2492 (70 aa).

The protein belongs to the UPF0352 family.

The sequence is that of UPF0352 protein Sfri_2492 from Shewanella frigidimarina (strain NCIMB 400).